The chain runs to 94 residues: Small ribosomal subunit protein uS19 (94 aa).

Belongs to the universal ribosomal protein uS19 family.

In terms of biological role, protein S19 forms a complex with S13 that binds strongly to the 16S ribosomal RNA. This is Small ribosomal subunit protein uS19 from Natranaerobius thermophilus (strain ATCC BAA-1301 / DSM 18059 / JW/NM-WN-LF).